A 498-amino-acid chain; its full sequence is Lysine--tRNA ligase (498 aa).

Mg(2+) contacts are provided by E408 and E415.

This sequence belongs to the class-II aminoacyl-tRNA synthetase family. As to quaternary structure, homodimer. It depends on Mg(2+) as a cofactor.

The protein resides in the cytoplasm. It carries out the reaction tRNA(Lys) + L-lysine + ATP = L-lysyl-tRNA(Lys) + AMP + diphosphate. The protein is Lysine--tRNA ligase of Listeria welshimeri serovar 6b (strain ATCC 35897 / DSM 20650 / CCUG 15529 / CIP 8149 / NCTC 11857 / SLCC 5334 / V8).